Reading from the N-terminus, the 2233-residue chain is Acetyl-CoA carboxylase (2233 aa).

Ser-2 is subject to N-acetylserine. Ser-2 bears the Phosphoserine mark. The Biotin carboxylation domain maps to 58–567; it reads VISKILIANN…TTGWLDDLIT (510 aa). The ATP-grasp domain occupies 216–408; that stretch reads KTGLVSVDDD…LPAAQLQIAM (193 aa). 256–261 lines the ATP pocket; sequence GGGGKG. Glu-365, Glu-379, and Asn-381 together coordinate Mn(2+). Residue Arg-383 is part of the active site. The Biotinyl-binding domain maps to 694-768; that stretch reads LEVENDPTQL…VAGDIMAIMT (75 aa). An N6-biotinyllysine modification is found at Lys-735. Residues Ser-790, Ser-1148, Ser-1157, and Ser-1162 each carry the phosphoserine modification. Residues 1486–1822 enclose the CoA carboxyltransferase N-terminal domain; sequence PYPVKEWLQP…KRNMPVPILE (337 aa). A carboxyltransferase region spans residues 1486 to 2141; sequence PYPVKEWLQP…EEYLIKRLSH (656 aa). Residue 1627-1629 coordinates acetyl-CoA; that stretch reads ARI. Arg-1731 provides a ligand contact to CoA. The CoA carboxyltransferase C-terminal domain maps to 1826–2141; sequence TWDRPVDFTP…EEYLIKRLSH (316 aa). Position 1998 (Gly-1998) interacts with acetyl-CoA. Lys-2034 and Arg-2036 together coordinate CoA.

Homodimer. The cofactor is biotin. It depends on Mn(2+) as a cofactor.

The protein resides in the cytoplasm. The protein localises to the endoplasmic reticulum membrane. The enzyme catalyses hydrogencarbonate + acetyl-CoA + ATP = malonyl-CoA + ADP + phosphate + H(+). It carries out the reaction N(6)-biotinyl-L-lysyl-[protein] + hydrogencarbonate + ATP = N(6)-carboxybiotinyl-L-lysyl-[protein] + ADP + phosphate + H(+). The protein operates within lipid metabolism; malonyl-CoA biosynthesis; malonyl-CoA from acetyl-CoA: step 1/1. Its activity is regulated as follows. By phosphorylation. The catalytic activity is inhibited by soraphen A, a polyketide isolated from the myxobacterium Sorangium cellulosum and a potent inhibitor of fungal growth. In terms of biological role, carries out three functions: biotin carboxyl carrier protein, biotin carboxylase and carboxyltransferase. Involved in the synthesis of very-long-chain fatty acid synthesis which is required to maintain a functional nuclear envelope. Required for acylation and vacuolar membrane association of VAC8 which is necessary to maintain a normal morphology of the vacuole. This is Acetyl-CoA carboxylase (ACC1) from Saccharomyces cerevisiae (strain ATCC 204508 / S288c) (Baker's yeast).